Reading from the N-terminus, the 48-residue chain is MAVPKRRVSKTRAAKRRTHYKVSLPMPIKDKDGSYKMPHRANPTTKEY.

The span at methionine 1–tyrosine 20 shows a compositional bias: basic residues. The disordered stretch occupies residues methionine 1–tyrosine 48.

Belongs to the bacterial ribosomal protein bL32 family.

In Campylobacter jejuni subsp. jejuni serotype O:2 (strain ATCC 700819 / NCTC 11168), this protein is Large ribosomal subunit protein bL32 (rpmF).